The sequence spans 245 residues: Dehydrogenase/reductase SDR family member 6 (245 aa).

NAD(+)-binding positions include 16 to 18 (QGI), Asp-37, and Asp-58. Arg-144 lines the substrate pocket. Tyr-147 functions as the Proton acceptor in the catalytic mechanism. NAD(+)-binding positions include Lys-151 and 180 to 184 (VDTPS). Arg-188 and Arg-205 together coordinate substrate.

The protein belongs to the short-chain dehydrogenases/reductases (SDR) family. Homotetramer. As to expression, detected in liver (at protein level).

It is found in the cytoplasm. It catalyses the reaction cis-4-hydroxy-L-proline + NAD(+) = 4-oxo-L-proline + NADH + H(+). It carries out the reaction (R)-3-hydroxybutanoate + NAD(+) = acetoacetate + NADH + H(+). The protein operates within amino-acid metabolism. Its pathway is siderophore biosynthesis. NAD(H)-dependent dehydrogenase/reductase with a preference for cyclic substrates. Catalyzes stereoselective conversion of 4-oxo-L-proline to cis-4-hydroxy-L-proline, likely a detoxification mechanism for ketoprolines. Mediates the formation of 2,5-dihydroxybenzoate (2,5-DHBA), a siderophore that chelates free cytoplasmic iron and associates with LCN2, thereby regulating iron transport and homeostasis while protecting cells against free radical-induced oxidative stress. The iron-siderophore complex is imported into mitochondria, providing an iron source for mitochondrial metabolic processes in particular heme synthesis. May act as a 3-hydroxybutyrate dehydrogenase. The polypeptide is Dehydrogenase/reductase SDR family member 6 (Homo sapiens (Human)).